A 392-amino-acid chain; its full sequence is Phospho-N-acetylmuramoyl-pentapeptide-transferase (392 aa).

The next 10 helical transmembrane spans lie at Arg28–Ile48, Thr74–Phe94, Phe100–Trp120, Tyr137–Glu157, Val193–Ala213, Gly225–Thr245, Ser262–Phe282, Val289–Ile309, Ile314–Val334, and Gln369–Leu389.

Belongs to the glycosyltransferase 4 family. MraY subfamily. The cofactor is Mg(2+).

Its subcellular location is the cell inner membrane. It catalyses the reaction UDP-N-acetyl-alpha-D-muramoyl-L-alanyl-gamma-D-glutamyl-meso-2,6-diaminopimeloyl-D-alanyl-D-alanine + di-trans,octa-cis-undecaprenyl phosphate = di-trans,octa-cis-undecaprenyl diphospho-N-acetyl-alpha-D-muramoyl-L-alanyl-D-glutamyl-meso-2,6-diaminopimeloyl-D-alanyl-D-alanine + UMP. Its pathway is cell wall biogenesis; peptidoglycan biosynthesis. Its function is as follows. Catalyzes the initial step of the lipid cycle reactions in the biosynthesis of the cell wall peptidoglycan: transfers peptidoglycan precursor phospho-MurNAc-pentapeptide from UDP-MurNAc-pentapeptide onto the lipid carrier undecaprenyl phosphate, yielding undecaprenyl-pyrophosphoryl-MurNAc-pentapeptide, known as lipid I. This Variovorax paradoxus (strain S110) protein is Phospho-N-acetylmuramoyl-pentapeptide-transferase.